The sequence spans 1007 residues: Rho-type GTPase-activating protein 1 (1007 aa).

LIM zinc-binding domains are found at residues 13-66 (CVRC…CFDC) and 70-122 (CKNC…CLSC). Disordered stretches follow at residues 203–293 (ITGY…KSPS), 401–478 (EKYS…STSL), and 505–600 (KETA…NDPS). Over residues 212-221 (NSGSSKFGSN) the composition is skewed to low complexity. 2 stretches are compositionally biased toward polar residues: residues 250-261 (ANMSLNVATDPT) and 270-293 (HSRN…KSPS). Position 278 is a phosphothreonine (T278). S291 carries the post-translational modification Phosphoserine. Residues 411 to 421 (KGRKISRSLSR) show a composition bias toward basic residues. The span at 454–466 (RSQDLMRDNDSHT) shows a compositional bias: basic and acidic residues. 2 stretches are compositionally biased toward polar residues: residues 467 to 478 (GLDTPNSNSTSL) and 529 to 579 (SPAT…LENS). Position 532 is a phosphothreonine (T532). Over residues 583 to 600 (EEQKETLYENSESRNDPS) the composition is skewed to basic and acidic residues. A Rho-GAP domain is found at 791–1006 (SSLVARCNYE…FIFGNYKDIL (216 aa)).

Its function is as follows. GTPase-activating protein (GAP) for CDC42 and/or RHO1. Negative regulator of the pheromone-response pathway through the STE20 protein kinase; acts at a step between the G-protein and the MAP kinase module. Dominant suppressor of bud emergence defect caused by deletion of IPL2/BEM2. Involved in the control of polarized cell growth and proper bud site selection. The protein is Rho-type GTPase-activating protein 1 (RGA1) of Saccharomyces cerevisiae (strain ATCC 204508 / S288c) (Baker's yeast).